The primary structure comprises 174 residues: Endoribonuclease YbeY (174 aa).

3 residues coordinate Zn(2+): His129, His133, and His139.

Belongs to the endoribonuclease YbeY family. Zn(2+) is required as a cofactor.

It localises to the cytoplasm. Single strand-specific metallo-endoribonuclease involved in late-stage 70S ribosome quality control and in maturation of the 3' terminus of the 16S rRNA. The chain is Endoribonuclease YbeY from Lactobacillus helveticus (strain DPC 4571).